The following is a 544-amino-acid chain: Methionine--tRNA ligase 2 (544 aa).

The 'HIGH' region signature appears at 10-20; that stretch reads PYANGSLHLGH. Cysteine 141, cysteine 144, cysteine 153, and cysteine 156 together coordinate Zn(2+). The 'KMSKS' region signature appears at 329 to 333; it reads KLSTS. Position 332 (threonine 332) interacts with ATP.

The protein belongs to the class-I aminoacyl-tRNA synthetase family. MetG type 1 subfamily. In terms of assembly, monomer. Requires Zn(2+) as cofactor.

It localises to the cytoplasm. It catalyses the reaction tRNA(Met) + L-methionine + ATP = L-methionyl-tRNA(Met) + AMP + diphosphate. In terms of biological role, is required not only for elongation of protein synthesis but also for the initiation of all mRNA translation through initiator tRNA(fMet) aminoacylation. The sequence is that of Methionine--tRNA ligase 2 from Bacillus cereus (strain ATCC 14579 / DSM 31 / CCUG 7414 / JCM 2152 / NBRC 15305 / NCIMB 9373 / NCTC 2599 / NRRL B-3711).